The following is a 251-amino-acid chain: Imidazole glycerol phosphate synthase subunit HisF (251 aa).

Active-site residues include aspartate 11 and aspartate 130.

This sequence belongs to the HisA/HisF family. Heterodimer of HisH and HisF.

The protein localises to the cytoplasm. The catalysed reaction is 5-[(5-phospho-1-deoxy-D-ribulos-1-ylimino)methylamino]-1-(5-phospho-beta-D-ribosyl)imidazole-4-carboxamide + L-glutamine = D-erythro-1-(imidazol-4-yl)glycerol 3-phosphate + 5-amino-1-(5-phospho-beta-D-ribosyl)imidazole-4-carboxamide + L-glutamate + H(+). The protein operates within amino-acid biosynthesis; L-histidine biosynthesis; L-histidine from 5-phospho-alpha-D-ribose 1-diphosphate: step 5/9. Functionally, IGPS catalyzes the conversion of PRFAR and glutamine to IGP, AICAR and glutamate. The HisF subunit catalyzes the cyclization activity that produces IGP and AICAR from PRFAR using the ammonia provided by the HisH subunit. This is Imidazole glycerol phosphate synthase subunit HisF from Chlorobaculum parvum (strain DSM 263 / NCIMB 8327) (Chlorobium vibrioforme subsp. thiosulfatophilum).